A 414-amino-acid chain; its full sequence is MIVRINKSVAFGSVKAPRSKSWAIRLILLSAISDEETTICSIPDSDDTEAALRMIEVLGSKVIRQGNCIRVIPNLRQCGGYVNVGGSGTVMRLGVALASSCRNPVIIDGDETLKRRPIRELLESLRSLGVNVNGDSLPVAINGPVKGNYVEIRGDLTSQYISGLIMLGLVSGITIRVIGDLVSRQYVDLTRRIIEESGCSVGVSNDVITVNECIPRISLSNVPGDYALSGFYTALALATGGLVTVTGLPKPLGYGDDSLVNIFSNAGARSVFSNGDWSVEGGGELRGIVVDLKDSPDLAPVVASIAPFASGETVITGVRHLAFKESNRLETISDSLRAFGVNVNHGDDSLRISGSITHGALIKCPNDHRIAMMSGVVAAGSNGESIIHNAECVNKSNRLFWRDLVKLGVKLTIN.

The 3-phosphoshikimate site is built by Lys-20, Ser-21, and Arg-25. Lys-20 lines the phosphoenolpyruvate pocket. Positions 88 and 116 each coordinate phosphoenolpyruvate. Residues Thr-157, Ser-158, Gln-159, Ser-183, Asp-297, and Lys-324 each contribute to the 3-phosphoshikimate site. Position 159 (Gln-159) interacts with phosphoenolpyruvate. The active-site Proton acceptor is Asp-297. Phosphoenolpyruvate-binding residues include Arg-328, Arg-369, and Lys-395.

It belongs to the EPSP synthase family. In terms of assembly, monomer.

It localises to the cytoplasm. The catalysed reaction is 3-phosphoshikimate + phosphoenolpyruvate = 5-O-(1-carboxyvinyl)-3-phosphoshikimate + phosphate. It participates in metabolic intermediate biosynthesis; chorismate biosynthesis. Functionally, catalyzes the transfer of the enolpyruvyl moiety of phosphoenolpyruvate (PEP) to the 5-hydroxyl of shikimate-3-phosphate (S3P) to produce enolpyruvyl shikimate-3-phosphate and inorganic phosphate. This Caldivirga maquilingensis (strain ATCC 700844 / DSM 13496 / JCM 10307 / IC-167) protein is 3-phosphoshikimate 1-carboxyvinyltransferase.